A 60-amino-acid chain; its full sequence is MKFSSIILLTLLICSMSIFGNCQVQTNVKCQGGSCASVCRREIGVAAGKCINGKCVCYRN.

A signal peptide spans 1-22 (MKFSSIILLTLLICSMSIFGNC). The residue at position 23 (Gln-23) is a Pyrrolidone carboxylic acid. Intrachain disulfides connect Cys-30-Cys-50, Cys-35-Cys-55, and Cys-39-Cys-57.

This sequence belongs to the short scorpion toxin superfamily. Potassium channel inhibitor family. Alpha-KTx 15 subfamily. Expressed by the venom gland.

Its subcellular location is the secreted. Blocker of A-type voltage-gated potassium channels of cerebellar granular cells. May also inhibit Kv4/KCND when coexpressed with DPP6 or DPP10. The occlusion of the outer entry of the K(+) conducting pore is partially reversible and affects both open and closed channels. It shares the same target in rat brain than BmTX3 (AC Q8I0L5) and AmmTX3 (AC P60208). Also shows a weak inhibition on Kv1.2/KCNA2 and Kv1.3/KCNA3 voltage-gated potassium channels. The chain is Potassium channel toxin alpha-KTx 15.8 from Olivierus martensii (Manchurian scorpion).